We begin with the raw amino-acid sequence, 934 residues long: Protein translocase subunit SecA (934 aa).

Residues Gln87, 105–109 (GEGKT), and Asp515 contribute to the ATP site. Cys918, Cys920, Cys929, and His930 together coordinate Zn(2+).

Belongs to the SecA family. Monomer and homodimer. Part of the essential Sec protein translocation apparatus which comprises SecA, SecYEG and auxiliary proteins SecDF-YajC and YidC. Zn(2+) serves as cofactor.

It is found in the cell inner membrane. The protein resides in the cytoplasm. It carries out the reaction ATP + H2O + cellular proteinSide 1 = ADP + phosphate + cellular proteinSide 2.. In terms of biological role, part of the Sec protein translocase complex. Interacts with the SecYEG preprotein conducting channel. Has a central role in coupling the hydrolysis of ATP to the transfer of proteins into and across the cell membrane, serving both as a receptor for the preprotein-SecB complex and as an ATP-driven molecular motor driving the stepwise translocation of polypeptide chains across the membrane. The polypeptide is Protein translocase subunit SecA (Ralstonia nicotianae (strain ATCC BAA-1114 / GMI1000) (Ralstonia solanacearum)).